The primary structure comprises 158 residues: 6,7-dimethyl-8-ribityllumazine synthase (158 aa).

5-amino-6-(D-ribitylamino)uracil is bound by residues phenylalanine 22, 57-59 (SYE), and 81-83 (TVI). Histidine 89 (proton donor) is an active-site residue. Phenylalanine 114 serves as a coordination point for 5-amino-6-(D-ribitylamino)uracil. Residue arginine 128 participates in (2S)-2-hydroxy-3-oxobutyl phosphate binding.

It belongs to the DMRL synthase family. As to quaternary structure, forms an icosahedral capsid composed of 60 subunits, arranged as a dodecamer of pentamers.

The catalysed reaction is (2S)-2-hydroxy-3-oxobutyl phosphate + 5-amino-6-(D-ribitylamino)uracil = 6,7-dimethyl-8-(1-D-ribityl)lumazine + phosphate + 2 H2O + H(+). It functions in the pathway cofactor biosynthesis; riboflavin biosynthesis; riboflavin from 2-hydroxy-3-oxobutyl phosphate and 5-amino-6-(D-ribitylamino)uracil: step 1/2. Catalyzes the formation of 6,7-dimethyl-8-ribityllumazine by condensation of 5-amino-6-(D-ribitylamino)uracil with 3,4-dihydroxy-2-butanone 4-phosphate. This is the penultimate step in the biosynthesis of riboflavin. This is 6,7-dimethyl-8-ribityllumazine synthase from Blochmanniella pennsylvanica (strain BPEN).